The following is a 92-amino-acid chain: UPF0237 protein MA_3235 (92 aa).

Positions 7 to 81 constitute an ACT domain; the sequence is IITVIGSDRV…KSLGVEVKVQ (75 aa).

The protein belongs to the UPF0237 family.

The chain is UPF0237 protein MA_3235 from Methanosarcina acetivorans (strain ATCC 35395 / DSM 2834 / JCM 12185 / C2A).